The following is a 492-amino-acid chain: Differentially expressed in FDCP 8 homolog (492 aa).

Residues 38 to 51 (GLGGSGSTGSGSEA) are compositionally biased toward gly residues. The tract at residues 38–62 (GLGGSGSTGSGSEAGGSEESGPQGA) is disordered. 2 consecutive Phorbol-ester/DAG-type zinc fingers follow at residues 161 to 214 (PHHG…KRVC) and 400 to 453 (DHIR…NMIC). Positions 468-492 (RMKSTEDDDDDDDGVATDDDVTAAE) are disordered. Over residues 473–492 (EDDDDDDDGVATDDDVTAAE) the composition is skewed to acidic residues.

This sequence belongs to the DEF8 family.

This chain is Differentially expressed in FDCP 8 homolog, found in Drosophila melanogaster (Fruit fly).